The sequence spans 1582 residues: Nik-related protein kinase (1582 aa).

The 289-residue stretch at 25 to 313 folds into the Protein kinase domain; sequence FSLDKTIGLG…SANMLQHPFV (289 aa). Residues 31 to 39 and Lys54 contribute to the ATP site; that span reads IGLGTYGRI. Asp177 functions as the Proton acceptor in the catalytic mechanism. 3 stretches are compositionally biased toward low complexity: residues 492 to 507, 527 to 538, and 551 to 572; these read QVQS…QTQT, PEQQRQGQAPEQ, and EQNQ…AQAE. The tract at residues 492 to 579 is disordered; sequence QVQSQVSKKQ…QAETEAEEPE (88 aa). A coiled-coil region spans residues 725 to 759; it reads QRRQRRWEDIFNQHEEELRQVDKDKEDESSDNDEV. Disordered regions lie at residues 783–859 and 926–1156; these read EVQE…PPYS and ASAD…GSGM. Polar residues-rich tracts occupy residues 803 to 814, 825 to 834, and 850 to 859; these read FSSSVPQRSLLE, RSSQNRQNWL, and RRSQSSPPYS. Phosphoserine occurs at positions 852 and 855. Positions 926-944 are enriched in acidic residues; that stretch reads ASADTDGDDDDESNDTFED. Basic and acidic residues-rich tracts occupy residues 965 to 978 and 999 to 1016; these read VCKD…KFVD and GSCK…EEAY. A phosphoserine mark is found at Ser1027, Ser1031, and Ser1034. Basic and acidic residues-rich tracts occupy residues 1043-1061 and 1125-1135; these read QEEH…EGDG and PDHESDNKDIS. A compositionally biased stretch (polar residues) spans 1136–1154; that stretch reads ESSTQSDFSANHSSPSKGS. One can recognise a CNH domain in the interval 1209-1552; the sequence is TSEICCGSLW…RFLCTRGDKL (344 aa).

This sequence belongs to the protein kinase superfamily. STE Ser/Thr protein kinase family. STE20 subfamily.

It catalyses the reaction L-seryl-[protein] + ATP = O-phospho-L-seryl-[protein] + ADP + H(+). The enzyme catalyses L-threonyl-[protein] + ATP = O-phospho-L-threonyl-[protein] + ADP + H(+). May phosphorylate cofilin-1 and induce actin polymerization through this process, during the late stages of embryogenesis. Involved in the TNF-alpha-induced signaling pathway. This chain is Nik-related protein kinase (NRK), found in Homo sapiens (Human).